The primary structure comprises 581 residues: Nicotinic acid-CoA ligase pyr1 (581 aa).

204-215 (MFLTSGTSGLPK) serves as a coordination point for AMP. The AMP-binding stretch occupies residues 477–555 (EIEGILLKDP…DEIPRTGIGK (79 aa)).

The protein belongs to the ATP-dependent AMP-binding enzyme family.

The enzyme catalyses nicotinate + ATP + CoA = nicotinyl-CoA + AMP + diphosphate. The protein operates within secondary metabolite biosynthesis; terpenoid biosynthesis. In terms of biological role, nicotinic acid-CoA ligase; part of the gene cluster that mediates the biosynthesis of pyripyropene A, a specific human acyl-coenzyme A:cholesterol acyltransferase 2 inhibitor. The first step of the pathway is the synthesis of nicotinyl-CoA from nicotinic acid by the nicotinic acid-CoA ligase pyr1. Nicotinyl-CoA is then a substrate of polyketide synthase pyr2 to produce 4-hydroxy-6-(3-pyridinyl)-2H-pyran-2-one (HPPO) which is further prenylated by the polyprenyl transferase pyr6 to yield farnesyl-HPPO. The next steps consist of an epoxidation of farnesyl-HPPO to epoxyfarnesyl-HPPO by FAD-dependent monooxygenase pyr5 and a cyclization of the terpenoid portion by the terpene cyclase pyr4 to yield deacetyl-pyripyropene E. The 2 cytochrome P450 monooxygenases pyr3 and pyr9, and the 2 acetyltransferases pyr7 and pyr8 are involved in the conversion of deacetyl-pyripyropene E into pyripyropene A through several cycles of oxidation and acetylation steps. Pyr7 acetylates deacetyl-pyripyropene E to pyripyropene E which is oxidized to 11-deacetyl-pyripyropene O by pyr3, which is in turn acetylated into pyripyropene O by pyr8. Pyripyropene O is then oxidized to deacetyl-pyripyropene A by pyr9. Deacetyl-pyripyropene A is finally acetylated to pyripyropene A by pyr8. The protein is Nicotinic acid-CoA ligase pyr1 of Aspergillus fumigatus (strain ATCC MYA-4609 / CBS 101355 / FGSC A1100 / Af293) (Neosartorya fumigata).